We begin with the raw amino-acid sequence, 140 residues long: ATP synthase epsilon chain (140 aa).

It belongs to the ATPase epsilon chain family. As to quaternary structure, F-type ATPases have 2 components, CF(1) - the catalytic core - and CF(0) - the membrane proton channel. CF(1) has five subunits: alpha(3), beta(3), gamma(1), delta(1), epsilon(1). CF(0) has three main subunits: a, b and c.

It localises to the cell inner membrane. Produces ATP from ADP in the presence of a proton gradient across the membrane. The protein is ATP synthase epsilon chain of Neisseria meningitidis serogroup C / serotype 2a (strain ATCC 700532 / DSM 15464 / FAM18).